Here is a 267-residue protein sequence, read N- to C-terminus: Glutamate racemase (267 aa).

Substrate-binding positions include 10 to 11 (DS) and 42 to 43 (YG). Catalysis depends on cysteine 73, which acts as the Proton donor/acceptor. Position 74 to 75 (74 to 75 (NT)) interacts with substrate. Cysteine 183 functions as the Proton donor/acceptor in the catalytic mechanism. Substrate is bound at residue 184–185 (TH).

Belongs to the aspartate/glutamate racemases family.

It carries out the reaction L-glutamate = D-glutamate. It participates in cell wall biogenesis; peptidoglycan biosynthesis. Its function is as follows. Provides the (R)-glutamate required for cell wall biosynthesis. This Lactobacillus helveticus (strain DPC 4571) protein is Glutamate racemase.